A 336-amino-acid chain; its full sequence is Isopentenyl-diphosphate delta-isomerase (336 aa).

5–6 (RK) lines the substrate pocket. FMN-binding positions include 60-62 (AMT), Ser90, and Asn117. Gln147 serves as a coordination point for substrate. Mg(2+) is bound at residue Glu148. FMN-binding positions include Lys179, Ser204, Thr209, 253 to 255 (GVR), and 274 to 275 (SR).

It belongs to the IPP isomerase type 2 family. In terms of assembly, homooctamer. Dimer of tetramers. FMN serves as cofactor. It depends on NADPH as a cofactor. Mg(2+) is required as a cofactor.

The protein localises to the cytoplasm. It carries out the reaction isopentenyl diphosphate = dimethylallyl diphosphate. In terms of biological role, involved in the biosynthesis of isoprenoids. Catalyzes the 1,3-allylic rearrangement of the homoallylic substrate isopentenyl (IPP) to its allylic isomer, dimethylallyl diphosphate (DMAPP). This Streptococcus pneumoniae (strain 70585) protein is Isopentenyl-diphosphate delta-isomerase.